The chain runs to 501 residues: Glucans biosynthesis protein G (501 aa).

A signal peptide spans 1–24 (MNRRQVLAALAAIPLLPEAFPANA).

It belongs to the OpgD/OpgG family.

The protein localises to the periplasm. It functions in the pathway glycan metabolism; osmoregulated periplasmic glucan (OPG) biosynthesis. In terms of biological role, involved in the biosynthesis of osmoregulated periplasmic glucans (OPGs). The polypeptide is Glucans biosynthesis protein G (Rhodopseudomonas palustris (strain BisA53)).